Consider the following 487-residue polypeptide: Glutamyl-tRNA(Gln) amidotransferase subunit A (487 aa).

Catalysis depends on charge relay system residues Lys80 and Ser155. Ser179 (acyl-ester intermediate) is an active-site residue.

Belongs to the amidase family. GatA subfamily. Heterotrimer of A, B and C subunits.

The enzyme catalyses L-glutamyl-tRNA(Gln) + L-glutamine + ATP + H2O = L-glutaminyl-tRNA(Gln) + L-glutamate + ADP + phosphate + H(+). Its function is as follows. Allows the formation of correctly charged Gln-tRNA(Gln) through the transamidation of misacylated Glu-tRNA(Gln) in organisms which lack glutaminyl-tRNA synthetase. The reaction takes place in the presence of glutamine and ATP through an activated gamma-phospho-Glu-tRNA(Gln). This chain is Glutamyl-tRNA(Gln) amidotransferase subunit A, found in Chloroflexus aurantiacus (strain ATCC 29366 / DSM 635 / J-10-fl).